We begin with the raw amino-acid sequence, 400 residues long: 2-octaprenylphenol hydroxylase (400 aa).

FAD contacts are provided by residues 49–52 (RVSA) and 297–303 (LAGQGVN).

This sequence belongs to the UbiH/COQ6 family. In terms of assembly, homotetramer. Component of the Ubi complex metabolon, which regroups five ubiquinone biosynthesis proteins (UbiE, UbiF, UbiG, UbiH and UbiI) and two accessory factors (UbiK and the lipid-binding protein UbiJ). FAD serves as cofactor.

It is found in the cytoplasm. It catalyses the reaction 2-all-trans-octaprenylphenol + NADPH + O2 + H(+) = 3-(all-trans-octaprenyl)benzene-1,2-diol + NADP(+) + H2O. It carries out the reaction a 2-(all-trans-polyprenyl)phenol + NADPH + O2 + H(+) = a 3-(all-trans-polyprenyl)benzene-1,2-diol + NADP(+) + H2O. Its pathway is cofactor biosynthesis; ubiquinone biosynthesis. In terms of biological role, FAD-dependent monooxygenase required for the aerobic hydroxylation of 2-octaprenylphenol to 2-octaprenyl-6-hydroxy-phenol, the first hydroxylation step in coenzyme Q (ubiquinone) biosynthesis. This is 2-octaprenylphenol hydroxylase from Escherichia coli (strain K12).